A 588-amino-acid chain; its full sequence is Phosphatidylinositol-3,5-bisphosphate 3-phosphatase mtm-1 (588 aa).

Residues 20–91 (IQESIDLKLL…GQVSRIEKVG (72 aa)) enclose the GRAM domain. Residues 164-543 (GWKIYSAEKE…CGLHVWIDYY (380 aa)) form the Myotubularin phosphatase domain. Asn293, Asn316, and Ile317 together coordinate a 1,2-diacyl-sn-glycero-3-phospho-(1D-myo-inositol-3,5-bisphosphate). Residues Asn293, Asn316, and Ile317 each coordinate a 1,2-diacyl-sn-glycero-3-phospho-(1D-myo-inositol-3-phosphate). Catalysis depends on Cys378, which acts as the Phosphocysteine intermediate. Positions 379, 380, 381, 382, 383, 384, 420, and 424 each coordinate a 1,2-diacyl-sn-glycero-3-phospho-(1D-myo-inositol-3,5-bisphosphate). A 1,2-diacyl-sn-glycero-3-phospho-(1D-myo-inositol-3-phosphate) is bound by residues Ser379, Asp380, Gly381, Trp382, Asp383, and Arg384. Ser379 is a phosphate binding site. Positions 381, 382, 383, and 384 each coordinate phosphate. Residue Arg424 participates in a 1,2-diacyl-sn-glycero-3-phospho-(1D-myo-inositol-3-phosphate) binding. A coiled-coil region spans residues 563 to 588 (AQFVDEKKQLLDEIMALDDAAQKLTA).

It belongs to the protein-tyrosine phosphatase family. Non-receptor class myotubularin subfamily. In terms of tissue distribution, expressed in embryo, larva and in adults. Expressed in a few head and tail neurons. Expressed in hypodermis, body wall and pharyngeal muscles, sheath cells, vulva, distal tip cells and coelomocytes.

Its subcellular location is the cell membrane. It is found in the cell projection. The protein localises to the phagocytic cup. It localises to the apical cell membrane. The protein resides in the cytoplasmic granule membrane. The catalysed reaction is a 1,2-diacyl-sn-glycero-3-phospho-(1D-myo-inositol-3,5-bisphosphate) + H2O = a 1,2-diacyl-sn-glycero-3-phospho-(1D-myo-inositol-5-phosphate) + phosphate. It catalyses the reaction a 1,2-diacyl-sn-glycero-3-phospho-(1D-myo-inositol-3-phosphate) + H2O = a 1,2-diacyl-sn-glycero-3-phospho-(1D-myo-inositol) + phosphate. The enzyme catalyses 1,2-dioctanoyl-sn-glycero-3-phospho-(1-D-myo-inositol-3-phosphate) + H2O = 1,2-dioctanoyl-sn-glycero-3-phospho-(1D-myo-inositol) + phosphate. Its function is as follows. Lipid phosphatase that specifically dephosphorylates phosphatidylinositol 3-phosphate (PI3P) and phosphatidylinositol 3,5-bisphosphate (PI(3,5)P2). Negatively regulates accumulation of PI3P on intracellular vesicles. Negatively regulates phagocytosis of apoptotic cells probably by limiting the recruitment and/or the activation of ced-5, ced-2 and ced-12 complex. In addition, may positively regulate phagosome maturation by promoting recycling of apoptotic receptor ced-1 back to the plasma membrane. Essential for embryonic and larval development. May promote migration of distal tip cells. This chain is Phosphatidylinositol-3,5-bisphosphate 3-phosphatase mtm-1, found in Caenorhabditis elegans.